The chain runs to 472 residues: Zinc finger and BTB domain-containing protein 18.2 (472 aa).

The 68-residue stretch at 24–91 (CDCTVLVGEA…MYEGKLEFSN (68 aa)) folds into the BTB domain. Residues 127–149 (KIIDDGEKDDKPVDSEEHHEHSF) show a composition bias toward basic and acidic residues. Disordered regions lie at residues 127 to 155 (KIIDDGEKDDKPVDSEEHHEHSFDASQQK), 197 to 236 (AGKTKANDSSPSSPLSQRSANHTHPPSDRDGALDLSFKPM), and 269 to 334 (DLLS…LSTS). A compositionally biased stretch (low complexity) spans 205-215 (SSPSSPLSQRS). Over residues 279–288 (AKSPKSQQVG) the composition is skewed to polar residues. The span at 309–319 (HTREDDLYQDR) shows a compositional bias: basic and acidic residues. C2H2-type zinc fingers lie at residues 344 to 366 (CICPLCSKVFPSPHILQLHLSSH), 384 to 406 (PTCTICGKTFSCMYTLKRHERTH), 412 to 434 (FTCGQCGKSFQYSHNLSRHAVVH), and 440 to 463 (HACKWCERRFTQSGDLYRHIRKFH).

It belongs to the krueppel C2H2-type zinc-finger protein family. ZBTB18 subfamily.

It is found in the nucleus. Functionally, transcriptional repressor that plays a role in various developmental processes. Specifically binds the consensus DNA sequence 5'-[AC]ACATCTG[GT][AC]-3' which contains the E box core, and acts by recruiting chromatin remodeling multiprotein complexes. This Xenopus laevis (African clawed frog) protein is Zinc finger and BTB domain-containing protein 18.2 (zbtb18.2).